Reading from the N-terminus, the 302-residue chain is Sulfate adenylyltransferase subunit 2 (302 aa).

It belongs to the PAPS reductase family. CysD subfamily. In terms of assembly, heterodimer composed of CysD, the smaller subunit, and CysN.

The enzyme catalyses sulfate + ATP + H(+) = adenosine 5'-phosphosulfate + diphosphate. It participates in sulfur metabolism; hydrogen sulfide biosynthesis; sulfite from sulfate: step 1/3. With CysN forms the ATP sulfurylase (ATPS) that catalyzes the adenylation of sulfate producing adenosine 5'-phosphosulfate (APS) and diphosphate, the first enzymatic step in sulfur assimilation pathway. APS synthesis involves the formation of a high-energy phosphoric-sulfuric acid anhydride bond driven by GTP hydrolysis by CysN coupled to ATP hydrolysis by CysD. This Escherichia coli O157:H7 (strain EC4115 / EHEC) protein is Sulfate adenylyltransferase subunit 2.